Consider the following 403-residue polypeptide: Phosphoglycerate kinase (403 aa).

Residues 22-24 (DFN), Arg37, 60-63 (HFGR), Arg119, and Arg152 each bind substrate. ATP-binding positions include Lys202, Glu324, and 354 to 357 (GGDT).

The protein belongs to the phosphoglycerate kinase family. Monomer.

The protein localises to the cytoplasm. It carries out the reaction (2R)-3-phosphoglycerate + ATP = (2R)-3-phospho-glyceroyl phosphate + ADP. It participates in carbohydrate degradation; glycolysis; pyruvate from D-glyceraldehyde 3-phosphate: step 2/5. This Maricaulis maris (strain MCS10) (Caulobacter maris) protein is Phosphoglycerate kinase.